Here is a 337-residue protein sequence, read N- to C-terminus: Ribosomal RNA small subunit methyltransferase C (337 aa).

It belongs to the methyltransferase superfamily. RsmC family. In terms of assembly, monomer.

It is found in the cytoplasm. The enzyme catalyses guanosine(1207) in 16S rRNA + S-adenosyl-L-methionine = N(2)-methylguanosine(1207) in 16S rRNA + S-adenosyl-L-homocysteine + H(+). Its function is as follows. Specifically methylates the guanine in position 1207 of 16S rRNA in the 30S particle. This Acinetobacter baumannii (strain ATCC 17978 / DSM 105126 / CIP 53.77 / LMG 1025 / NCDC KC755 / 5377) protein is Ribosomal RNA small subunit methyltransferase C.